Reading from the N-terminus, the 4328-residue chain is Cadherin-4 (4328 aa).

Positions 1-23 (MKKHRVFHLFLLIFCKAISLVTT) are cleaved as a signal peptide. Over 24–4072 (SSSTEQIFEF…TVLEFLLKAE (4049 aa)) the chain is Extracellular. N-linked (GlcNAc...) asparagine glycans are attached at residues Asn-39 and Asn-56. Cadherin domains follow at residues 108–153 (PLNR…SPVF) and 156–275 (GEQG…NPNI). Asn-196, Asn-330, Asn-339, Asn-365, Asn-431, Asn-452, and Asn-584 each carry an N-linked (GlcNAc...) asparagine glycan. Cadherin domains follow at residues 384-492 (DNEK…APVF), 507-608 (PGDV…SPVF), 609-720 (SSFP…SPQF), 721-826 (DEVS…PPKC), 827-934 (VVQH…AIEF), 935-1051 (DDVA…KPMY), 1047-1156 (KKPM…SPTF), 1175-1262 (RIFA…PPEI), 1265-1363 (KKSD…RPKF), 1364-1467 (SASH…SPYF), and 1476-1570 (VDES…APET). N-linked (GlcNAc...) asparagine glycans are attached at residues Asn-811 and Asn-899. The Cell attachment site signature appears at 1090–1092 (RGD). Asn-1192 carries an N-linked (GlcNAc...) asparagine glycan. Residues 1246-1267 (NSAGQKPRKSKNSPPEISGKKS) are disordered. A glycan (N-linked (GlcNAc...) asparagine) is linked at Asn-1335. Asn-1610 is a glycosylation site (N-linked (GlcNAc...) asparagine). Residues 1671-1784 (RRQVYRGTIR…IDENDEPPRF (114 aa)) form the Cadherin 14 domain. N-linked (GlcNAc...) asparagine glycosylation is present at Asn-1895. The region spanning 1917–1984 (FSIVNPHEAF…ENINDETPIF (68 aa)) is the Cadherin 15 domain. Residues Asn-2059, Asn-2150, Asn-2216, Asn-2367, Asn-2413, Asn-2440, and Asn-2535 are each glycosylated (N-linked (GlcNAc...) asparagine). Cadherin domains are found at residues 2187 to 2285 (EKLK…MPEF) and 2286 to 2397 (IRSD…PPRF). 9 Cadherin domains span residues 2429 to 2505 (LQFS…PPFF), 2506 to 2608 (VLPF…VPRF), 2609 to 2712 (SNSH…APAF), 2719 to 2813 (FTIS…PPQF), 2828 to 2915 (SPIL…CPEA), 2913 to 3011 (PEAN…RPKI), 3012 to 3113 (IEKL…APTF), 3114 to 3216 (EKST…APKF), and 3217 to 3326 (EKEK…APTF). 5 N-linked (GlcNAc...) asparagine glycosylation sites follow: Asn-2844, Asn-2916, Asn-2941, Asn-3083, and Asn-3143. A glycan (N-linked (GlcNAc...) asparagine) is linked at Asn-3330. 2 consecutive Cadherin domains span residues 3335-3428 (VQEG…APTM) and 3429-3554 (KPMK…VDEF). Asn-3512 carries N-linked (GlcNAc...) asparagine glycosylation. One can recognise an EGF-like 1 domain in the interval 3706–3744 (ETNQCAKSPCEQWQLCIPSVHNSTYECVCPLGMEGDKCS). Disulfide bonds link Cys-3710/Cys-3721, Cys-3715/Cys-3732, Cys-3734/Cys-3743, Cys-3898/Cys-3925, Cys-3933/Cys-3944, Cys-3938/Cys-3954, Cys-3956/Cys-3965, Cys-3972/Cys-3983, Cys-3977/Cys-3992, and Cys-3994/Cys-4003. Asn-3727 carries N-linked (GlcNAc...) asparagine glycosylation. The Laminin G-like domain maps to 3757–3925 (EAELSVGGDG…MKLFGAQPGC (169 aa)). EGF-like domains follow at residues 3929–3966 (TSSP…NVCE) and 3968–4004 (DLEP…KHCE). Asn-4043 carries N-linked (GlcNAc...) asparagine glycosylation. Residues 4073 to 4093 (IVIVILGVLLLLLVFCLTFIT) traverse the membrane as a helical segment. Residues 4094-4328 (WKCCKKNRDP…IDEEVNIHIS (235 aa)) are Cytoplasmic-facing. 2 disordered regions span residues 4143-4215 (TSSV…SSLR) and 4268-4311 (NFER…PISL). Basic and acidic residues predominate over residues 4178–4196 (TRRDPLPSDKFRRVDETAN). The short motif at 4207-4209 (RGD) is the Cell attachment site element.

In terms of tissue distribution, in larvae and adult, it is expressed in various tissues including pharyngeal muscle, hypodermis and gonad. In the nervous system it is expressed in sensory neurons and motor neurons in the ventral cord.

It localises to the cell membrane. Its function is as follows. Potential calcium-dependent cell-adhesion protein that controls axon guidance in the ventral cord. The chain is Cadherin-4 from Caenorhabditis elegans.